The primary structure comprises 217 residues: UPF0319 protein VS_II0881 (217 aa).

A signal peptide spans 1–21 (MKTIQSIALLSAIVAAPSVLA).

This sequence belongs to the UPF0319 family.

The polypeptide is UPF0319 protein VS_II0881 (Vibrio atlanticus (strain LGP32) (Vibrio splendidus (strain Mel32))).